An 87-amino-acid chain; its full sequence is Acylphosphatase (87 aa).

Positions 2-87 (RLTALVSGTV…ATGLRDFHVY (86 aa)) constitute an Acylphosphatase-like domain. Active-site residues include Arg17 and Asn35.

It belongs to the acylphosphatase family.

It catalyses the reaction an acyl phosphate + H2O = a carboxylate + phosphate + H(+). The chain is Acylphosphatase (acyP) from Deinococcus geothermalis (strain DSM 11300 / CIP 105573 / AG-3a).